The following is a 616-amino-acid chain: Zinc metalloproteinase-disintegrin-like VLAIP-A (616 aa).

Positions 1 to 20 are cleaved as a signal peptide; it reads MMQVLLVTISLAVFPYQGSS. Residues 21-194 constitute a propeptide that is removed on maturation; it reads IILESGNVND…KASQLNLTPE (174 aa). Gln-195 bears the Pyrrolidone carboxylic acid mark. The 197-residue stretch at 203 to 399 folds into the Peptidase M12B domain; the sequence is KYIKLVIVAD…KMPQCILNKP (197 aa). Intrachain disulfides connect Cys-314–Cys-394, Cys-354–Cys-378, and Cys-356–Cys-361. Position 339 (His-339) interacts with Zn(2+). Glu-340 is an active-site residue. Positions 343 and 349 each coordinate Zn(2+). N-linked (GlcNAc...) asparagine glycosylation is present at Asn-377. Residues 407-493 enclose the Disintegrin domain; it reads PAVCGNYLVE…ECPTDQFQRN (87 aa). Residues Val-409, Asn-412, Leu-414, Glu-416, Glu-419, and Asp-422 each coordinate Ca(2+). 14 cysteine pairs are disulfide-bonded: Cys-410–Cys-439, Cys-421–Cys-434, Cys-423–Cys-429, Cys-433–Cys-456, Cys-447–Cys-453, Cys-452–Cys-478, Cys-465–Cys-485, Cys-472–Cys-504, Cys-497–Cys-509, Cys-516–Cys-566, Cys-531–Cys-577, Cys-544–Cys-554, Cys-561–Cys-603, and Cys-597–Cys-609. The D/ECD-tripeptide motif lies at 471–473; the sequence is ECD.

Belongs to the venom metalloproteinase (M12B) family. P-III subfamily. P-IIIc sub-subfamily. Heterodimer; disulfide-linked. Zn(2+) is required as a cofactor. The N-terminus is blocked. As to expression, expressed by the venom gland.

The protein resides in the secreted. Its activity is regulated as follows. Inhibited by EDTA or 1,10-phenanthroline. Not inhibited by PMSF. Functionally, snake venom zinc metalloprotease that hydrolyzes the alpha-chain (FGA) and more slowly the beta-chain (FGB) of fibrinogen, without affecting the gamma-chain. Cleaves alpha-chain of fibrinogen at '432-Lys-|-Leu-433' and '535-Pro-|-Met-536' bonds. Induces apoptosis in vascular endothelial cells and inhibits endothelial cell adhesion to extracellular matrix proteins such as fibrinogen, fibronectin, vitronectin, collagen I, and collagen IV. Also hydrolyzes azocasein, and insulin B-chain (at the '38-Ala-|-Leu-39' bond). This is Zinc metalloproteinase-disintegrin-like VLAIP-A from Macrovipera lebetinus (Levantine viper).